Reading from the N-terminus, the 710-residue chain is Prolyl endopeptidase (710 aa).

Met-1 bears the N-acetylmethionine mark. Residue Lys-157 is modified to N6-acetyllysine. Catalysis depends on charge relay system residues Ser-554, Asp-641, and His-680.

Belongs to the peptidase S9A family.

It localises to the cytoplasm. The enzyme catalyses Hydrolysis of Pro-|-Xaa &gt;&gt; Ala-|-Xaa in oligopeptides.. Cleaves peptide bonds on the C-terminal side of prolyl residues within peptides that are up to approximately 30 amino acids long. This Mus musculus (Mouse) protein is Prolyl endopeptidase (Prep).